The chain runs to 932 residues: Lipoxygenase 2.2, chloroplastic (932 aa).

The PLAT domain occupies 79–219 (MKATVSVHMK…CSPDKRTFFP (141 aa)). The Lipoxygenase domain occupies 223-932 (SYIPSQTPKG…EMGIPNSISI (710 aa)). Over residues 270–284 (PESKRPVLGGKEHPY) the composition is skewed to basic and acidic residues. A disordered region spans residues 270–311 (PESKRPVLGGKEHPYPRRCRTGRPRSKTDPSSEEESHKKGEM). Residues 285 to 294 (PRRCRTGRPR) show a composition bias toward basic residues. The segment covering 295–311 (SKTDPSSEEESHKKGEM) has biased composition (basic and acidic residues). His588, His593, His778, Asn782, and Ile932 together coordinate Fe cation.

This sequence belongs to the lipoxygenase family. It depends on Fe cation as a cofactor.

Its subcellular location is the plastid. It is found in the chloroplast. The catalysed reaction is (9Z,12Z)-octadecadienoate + O2 = (13S)-hydroperoxy-(9Z,11E)-octadecadienoate. It catalyses the reaction (9Z,12Z,15Z)-octadecatrienoate + O2 = (13S)-hydroperoxy-(9Z,11E,15Z)-octadecatrienoate. The protein operates within lipid metabolism; oxylipin biosynthesis. Its function is as follows. Plant lipoxygenase may be involved in a number of diverse aspects of plant physiology including growth and development, pest resistance, and senescence or responses to wounding. This enzyme exhibits linoleate 13-lipoxygenase activity. This is Lipoxygenase 2.2, chloroplastic (LOX2.2) from Hordeum vulgare (Barley).